We begin with the raw amino-acid sequence, 287 residues long: 4,4'-diapophytoene synthase (287 aa).

(2E,6E)-farnesyl diphosphate contacts are provided by residues 18–21 (HSKS), Tyr-41, and Arg-45. Positions 48 and 52 each coordinate Mg(2+). Residue Gln-165 coordinates (2E,6E)-farnesyl diphosphate. A Mg(2+)-binding site is contributed by Asn-168. Residue Arg-171 participates in (2E,6E)-farnesyl diphosphate binding. Asp-172 contacts Mg(2+). (2E,6E)-farnesyl diphosphate is bound at residue Tyr-248.

It belongs to the phytoene/squalene synthase family. CrtM subfamily. It depends on Mg(2+) as a cofactor.

The catalysed reaction is 2 (2E,6E)-farnesyl diphosphate = 15-cis-4,4'-diapophytoene + 2 diphosphate. It participates in carotenoid biosynthesis; staphyloxanthin biosynthesis; staphyloxanthin from farnesyl diphosphate: step 1/5. Its function is as follows. Involved in the biosynthesis of the yellow-orange carotenoid staphyloxanthin, which plays a role in the virulence via its protective function against oxidative stress. Catalyzes the head-to-head condensation of two molecules of farnesyl diphosphate (FPP) into the colorless C(30) carotenoid 4,4'-diapophytoene (dehydrosqualene). In Staphylococcus aureus (strain Mu50 / ATCC 700699), this protein is 4,4'-diapophytoene synthase (crtM).